The chain runs to 796 residues: Phenylalanine--tRNA ligase beta subunit (796 aa).

A tRNA-binding domain is found at 39–149 (SAALKSFRVA…GDAPLGTTFA (111 aa)). One can recognise a B5 domain in the interval 398 to 470 (LARKALAYDP…RVHGLDAVPS (73 aa)). Mg(2+) is bound by residues Asp-448, Asp-454, Glu-457, and Glu-458. An FDX-ACB domain is found at 703–795 (PALQAVTRDF…AAGKLGAELR (93 aa)).

This sequence belongs to the phenylalanyl-tRNA synthetase beta subunit family. Type 1 subfamily. Tetramer of two alpha and two beta subunits. Mg(2+) is required as a cofactor.

The protein localises to the cytoplasm. It carries out the reaction tRNA(Phe) + L-phenylalanine + ATP = L-phenylalanyl-tRNA(Phe) + AMP + diphosphate + H(+). The chain is Phenylalanine--tRNA ligase beta subunit from Novosphingobium aromaticivorans (strain ATCC 700278 / DSM 12444 / CCUG 56034 / CIP 105152 / NBRC 16084 / F199).